We begin with the raw amino-acid sequence, 940 residues long: UvrABC system protein A (940 aa).

Residue 32–39 coordinates ATP; the sequence is GLSGSGKS. The C4-type zinc-finger motif lies at 252–279; the sequence is CIDCGISIDEISPRLFSFNSPFGKCDYC. 2 consecutive ABC transporter domains span residues 309–589 and 609–937; these read WANT…EGSL and SNGK…HYLK. ATP is bound at residue 641 to 648; the sequence is GVSGSGKS. Residues 740–766 form a C4-type zinc finger; it reads CEACKGDGIIKIEMQFLSDVYVPCEIC.

It belongs to the ABC transporter superfamily. UvrA family. As to quaternary structure, forms a heterotetramer with UvrB during the search for lesions.

Its subcellular location is the cytoplasm. Its function is as follows. The UvrABC repair system catalyzes the recognition and processing of DNA lesions. UvrA is an ATPase and a DNA-binding protein. A damage recognition complex composed of 2 UvrA and 2 UvrB subunits scans DNA for abnormalities. When the presence of a lesion has been verified by UvrB, the UvrA molecules dissociate. This chain is UvrABC system protein A, found in Clostridium tetani (strain Massachusetts / E88).